Here is a 364-residue protein sequence, read N- to C-terminus: Mannose-1-phosphate guanyltransferase (364 aa).

It belongs to the transferase hexapeptide repeat family.

The protein resides in the cytoplasm. The enzyme catalyses alpha-D-mannose 1-phosphate + GTP + H(+) = GDP-alpha-D-mannose + diphosphate. It participates in nucleotide-sugar biosynthesis; GDP-alpha-D-mannose biosynthesis; GDP-alpha-D-mannose from alpha-D-mannose 1-phosphate (GTP route): step 1/1. In terms of biological role, involved in cell wall synthesis where it is required for glycosylation. Involved in cell cycle progression through cell-size checkpoint. The polypeptide is Mannose-1-phosphate guanyltransferase (mpg1) (Emericella nidulans (strain FGSC A4 / ATCC 38163 / CBS 112.46 / NRRL 194 / M139) (Aspergillus nidulans)).